The chain runs to 351 residues: Peroxisomal membrane protein PEX14 (351 aa).

The interval 54–75 is disordered; the sequence is KARTGTVQASPSQQSVVPPRPP. The span at 60 to 70 shows a compositional bias: low complexity; it reads VQASPSQQSVV. Positions 83-91 match the SH3-binding motif; sequence APPLPERDW. The tract at residues 243-351 is disordered; it reads APQLSTPPSE…RGIPAWQLNA (109 aa). Residues 245–258 are compositionally biased toward polar residues; it reads QLSTPPSESTSRQS. Residues 283–293 show a composition bias toward basic and acidic residues; that stretch reads VLSREKDKDVN. A compositionally biased stretch (polar residues) spans 294-303; sequence SDSIAQYEQR. The span at 320–334 shows a compositional bias: low complexity; the sequence is SASNGGSSTTSGVAG.

This sequence belongs to the peroxin-14 family. Interacts with PEX13 (via SH3 domain); forming the PEX13-PEX14 docking complex. Interacts with PEX5 (via WxxxF/Y motifs).

The protein localises to the peroxisome membrane. In terms of biological role, component of the PEX13-PEX14 docking complex, a translocon channel that specifically mediates the import of peroxisomal cargo proteins bound to PEX5 receptor. The PEX13-PEX14 docking complex forms a large import pore which can be opened to a diameter of about 9 nm. Mechanistically, PEX5 receptor along with cargo proteins associates with the PEX14 subunit of the PEX13-PEX14 docking complex in the cytosol, leading to the insertion of the receptor into the organelle membrane with the concomitant translocation of the cargo into the peroxisome matrix. This Pichia angusta (Yeast) protein is Peroxisomal membrane protein PEX14.